Consider the following 157-residue polypeptide: DNA gyrase inhibitor (157 aa).

It belongs to the DNA gyrase inhibitor family. As to quaternary structure, interacts with DNA gyrase.

It localises to the cytoplasm. Functionally, inhibits the supercoiling activity of DNA gyrase. Acts by inhibiting DNA gyrase at an early step, prior to (or at the step of) binding of DNA by the gyrase. It protects cells against toxins that target DNA gyrase, by inhibiting activity of these toxins and reducing the formation of lethal double-strand breaks in the cell. The protein is DNA gyrase inhibitor of Shigella boydii serotype 18 (strain CDC 3083-94 / BS512).